The sequence spans 860 residues: Linoleate 9S-lipoxygenase A (860 aa).

The region spanning 29–159 is the PLAT domain; the sequence is NALDFTDLAG…RYKSDRIFFA (131 aa). Residues 162–860 enclose the Lipoxygenase domain; it reads PYLPSETPEL…GKGIPNSVSI (699 aa). The disordered stretch occupies residues 209-246; the sequence is PDQGKENVRTTLGGSADYPYPRRGRTGRPPTRTDPKSE. Positions 521, 526, 712, 716, and 860 each coordinate Fe cation.

Belongs to the lipoxygenase family. Monomer. The cofactor is Fe cation. As to expression, expressed in germinating seeds as well as in ripening fruit.

It is found in the cytoplasm. It carries out the reaction (9Z,12Z)-octadecadienoate + O2 = (9S)-hydroperoxy-(10E,12Z)-octadecadienoate. It functions in the pathway lipid metabolism; oxylipin biosynthesis. Plant lipoxygenase may be involved in a number of diverse aspects of plant physiology including growth and development, pest resistance, and senescence or responses to wounding. It catalyzes the hydroperoxidation of lipids containing a cis,cis-1,4-pentadiene structure. In Solanum lycopersicum (Tomato), this protein is Linoleate 9S-lipoxygenase A (LOX1.1).